Reading from the N-terminus, the 336-residue chain is Glyceraldehyde-3-phosphate dehydrogenase 1 (336 aa).

NAD(+) is bound by residues 12–13 (RI), Asp-34, and Ser-120. Residues 150 to 152 (SCT), Thr-181, Arg-198, 211 to 212 (TG), and Arg-234 each bind D-glyceraldehyde 3-phosphate. Cys-151 functions as the Nucleophile in the catalytic mechanism. Residue Asn-316 coordinates NAD(+).

This sequence belongs to the glyceraldehyde-3-phosphate dehydrogenase family. Homotetramer.

It localises to the cytoplasm. The enzyme catalyses D-glyceraldehyde 3-phosphate + phosphate + NAD(+) = (2R)-3-phospho-glyceroyl phosphate + NADH + H(+). Its pathway is carbohydrate degradation; glycolysis; pyruvate from D-glyceraldehyde 3-phosphate: step 1/5. In terms of biological role, catalyzes the oxidative phosphorylation of glyceraldehyde 3-phosphate (G3P) to 1,3-bisphosphoglycerate (BPG) using the cofactor NAD. The first reaction step involves the formation of a hemiacetal intermediate between G3P and a cysteine residue, and this hemiacetal intermediate is then oxidized to a thioester, with concomitant reduction of NAD to NADH. The reduced NADH is then exchanged with the second NAD, and the thioester is attacked by a nucleophilic inorganic phosphate to produce BPG. This is Glyceraldehyde-3-phosphate dehydrogenase 1 (gapA1) from Staphylococcus epidermidis (strain ATCC 35984 / DSM 28319 / BCRC 17069 / CCUG 31568 / BM 3577 / RP62A).